Here is a 529-residue protein sequence, read N- to C-terminus: Basal body-orientation factor 1 (529 aa).

The segment covering 1–13 (MPSKGKDKKKGKS) has biased composition (basic residues). Positions 1-22 (MPSKGKDKKKGKSKGKDTKKLI) are disordered. Coiled-coil stretches lie at residues 85-201 (LKKQ…EAEK) and 271-361 (VKEK…EVER).

This sequence belongs to the BBOF1 family. Interacts with MNS1 and ODF2.

It is found in the cytoplasm. It localises to the cytoskeleton. Its subcellular location is the cilium basal body. The protein resides in the flagellum axoneme. Its function is as follows. Plays an essential role in sperm motility and male fertility by stabilizing the sperm flagellar axonemal structure. May be required for the stability of ODF2 and MANS1 proteins. Dispensable for the assembly and function of motile cilia. The protein is Basal body-orientation factor 1 of Homo sapiens (Human).